The chain runs to 901 residues: Protein translocase subunit SecA (901 aa).

Residues glutamine 87, 105–109 (GEGKT), and aspartate 512 each bind ATP. The disordered stretch occupies residues 855-891 (QQLSHQDDETAAAAALAEQTGERKVGRNDPCPCGSGK). Positions 885, 887, 896, and 897 each coordinate Zn(2+).

This sequence belongs to the SecA family. As to quaternary structure, monomer and homodimer. Part of the essential Sec protein translocation apparatus which comprises SecA, SecYEG and auxiliary proteins SecDF-YajC and YidC. The cofactor is Zn(2+).

It localises to the cell inner membrane. It is found in the cytoplasm. The enzyme catalyses ATP + H2O + cellular proteinSide 1 = ADP + phosphate + cellular proteinSide 2.. Functionally, part of the Sec protein translocase complex. Interacts with the SecYEG preprotein conducting channel. Has a central role in coupling the hydrolysis of ATP to the transfer of proteins into and across the cell membrane, serving both as a receptor for the preprotein-SecB complex and as an ATP-driven molecular motor driving the stepwise translocation of polypeptide chains across the membrane. In Cronobacter sakazakii (strain ATCC BAA-894) (Enterobacter sakazakii), this protein is Protein translocase subunit SecA.